Here is a 510-residue protein sequence, read N- to C-terminus: D-alanine--D-alanyl carrier protein ligase (510 aa).

157-158 (TS) lines the ATP pocket. D202 contacts D-alanine. ATP is bound at residue 297–302 (NTYGPT). Position 306 (V306) interacts with D-alanine. ATP-binding residues include D389 and K498. K498 serves as a coordination point for D-alanine.

The protein belongs to the ATP-dependent AMP-binding enzyme family. DltA subfamily.

It is found in the cytoplasm. The catalysed reaction is holo-[D-alanyl-carrier protein] + D-alanine + ATP = D-alanyl-[D-alanyl-carrier protein] + AMP + diphosphate. It participates in cell wall biogenesis; lipoteichoic acid biosynthesis. In terms of biological role, catalyzes the first step in the D-alanylation of lipoteichoic acid (LTA), the activation of D-alanine and its transfer onto the D-alanyl carrier protein (Dcp) DltC. In an ATP-dependent two-step reaction, forms a high energy D-alanyl-AMP intermediate, followed by transfer of the D-alanyl residue as a thiol ester to the phosphopantheinyl prosthetic group of the Dcp. D-alanylation of LTA plays an important role in modulating the properties of the cell wall in Gram-positive bacteria, influencing the net charge of the cell wall. The sequence is that of D-alanine--D-alanyl carrier protein ligase from Listeria welshimeri serovar 6b (strain ATCC 35897 / DSM 20650 / CCUG 15529 / CIP 8149 / NCTC 11857 / SLCC 5334 / V8).